The following is a 328-amino-acid chain: Malate dehydrogenase (328 aa).

11 to 17 (GAAGQIG) contributes to the NAD(+) binding site. Substrate-binding residues include arginine 94 and arginine 100. Residues asparagine 107, glutamine 114, and 131-133 (VGN) contribute to the NAD(+) site. Residues asparagine 133 and arginine 164 each coordinate substrate. Catalysis depends on histidine 189, which acts as the Proton acceptor.

Belongs to the LDH/MDH superfamily. MDH type 2 family.

It carries out the reaction (S)-malate + NAD(+) = oxaloacetate + NADH + H(+). Functionally, catalyzes the reversible oxidation of malate to oxaloacetate. The sequence is that of Malate dehydrogenase from Xylella fastidiosa (strain Temecula1 / ATCC 700964).